Here is a 500-residue protein sequence, read N- to C-terminus: NAD(P)H-quinone oxidoreductase chain 4, chloroplastic (500 aa).

14 consecutive transmembrane segments (helical) span residues 4–24 (FPWLTILVVLPIFAGSLIFFL), 37–57 (ISICLLEFLLMTYAFCYHFQL), 87–107 (LGSILLTGFITTLATLAAWPI), 113–130 (LFYFLMLAMYSGQIGLFS), 134–154 (LLLFFIMWELELIPVYLLLSM), 167–187 (FILYTAGGSIFFLIGVLGMGL), 211–231 (ILLYFGFLIAYAVKLPIIPLH), 242–262 (HYSTCMLLAGILLKMGAYGLI), 274–294 (YLFSPWLVIIGAIQIIYAALT), 313–333 (MGFIIIGIGSITNIGLNGAIL), 334–354 (QILSHGFIGATLFFLAGTASD), 386–406 (LALPGMSGFVAELVVFFGLIT), 417–437 (LITFVMAIGMILTPIYLLSML), and 462–482 (LFILICIFLPVIGIGIYPDFV).

Belongs to the complex I subunit 4 family.

It localises to the plastid. It is found in the chloroplast thylakoid membrane. The enzyme catalyses a plastoquinone + NADH + (n+1) H(+)(in) = a plastoquinol + NAD(+) + n H(+)(out). The catalysed reaction is a plastoquinone + NADPH + (n+1) H(+)(in) = a plastoquinol + NADP(+) + n H(+)(out). The chain is NAD(P)H-quinone oxidoreductase chain 4, chloroplastic (ndhD) from Hordeum vulgare (Barley).